The primary structure comprises 98 residues: ESAT-6-like protein EsxK (98 aa).

Belongs to the WXG100 family. CFP-10 subfamily. In terms of assembly, strongly interacts with EsxL to form a heterodimeric complex under reducing conditions. The complex is regulated by the redox state of EsxL.

Its subcellular location is the secreted. The chain is ESAT-6-like protein EsxK from Mycobacterium tuberculosis (strain ATCC 25618 / H37Rv).